The primary structure comprises 180 residues: Urease accessory protein UreE (180 aa).

Residues 71 to 90 (AAPSGAGHGDGEQDGTGAPG) form a disordered region.

It belongs to the UreE family.

Its subcellular location is the cytoplasm. Its function is as follows. Involved in urease metallocenter assembly. Binds nickel. Probably functions as a nickel donor during metallocenter assembly. This is Urease accessory protein UreE from Kocuria rhizophila (strain ATCC 9341 / DSM 348 / NBRC 103217 / DC2201).